A 555-amino-acid polypeptide reads, in one-letter code: Dihydroxy-acid dehydratase (555 aa).

Residue cysteine 46 coordinates [2Fe-2S] cluster. Aspartate 78 lines the Mg(2+) pocket. Cysteine 119 serves as a coordination point for [2Fe-2S] cluster. Residues aspartate 120 and lysine 121 each coordinate Mg(2+). Lysine 121 is subject to N6-carboxylysine. Residue cysteine 191 coordinates [2Fe-2S] cluster. Mg(2+) is bound at residue glutamate 442. Serine 468 acts as the Proton acceptor in catalysis.

This sequence belongs to the IlvD/Edd family. As to quaternary structure, homodimer. It depends on [2Fe-2S] cluster as a cofactor. Requires Mg(2+) as cofactor.

The catalysed reaction is (2R)-2,3-dihydroxy-3-methylbutanoate = 3-methyl-2-oxobutanoate + H2O. The enzyme catalyses (2R,3R)-2,3-dihydroxy-3-methylpentanoate = (S)-3-methyl-2-oxopentanoate + H2O. Its pathway is amino-acid biosynthesis; L-isoleucine biosynthesis; L-isoleucine from 2-oxobutanoate: step 3/4. The protein operates within amino-acid biosynthesis; L-valine biosynthesis; L-valine from pyruvate: step 3/4. Its function is as follows. Functions in the biosynthesis of branched-chain amino acids. Catalyzes the dehydration of (2R,3R)-2,3-dihydroxy-3-methylpentanoate (2,3-dihydroxy-3-methylvalerate) into 2-oxo-3-methylpentanoate (2-oxo-3-methylvalerate) and of (2R)-2,3-dihydroxy-3-methylbutanoate (2,3-dihydroxyisovalerate) into 2-oxo-3-methylbutanoate (2-oxoisovalerate), the penultimate precursor to L-isoleucine and L-valine, respectively. This chain is Dihydroxy-acid dehydratase, found in Thermus thermophilus (strain ATCC 27634 / DSM 579 / HB8).